A 391-amino-acid polypeptide reads, in one-letter code: Elongation factor Tu (391 aa).

Residues 10–201 (KPHVNIGTIG…QVDAYIPTPV (192 aa)) form the tr-type G domain. The segment at 19-26 (GHVDHGKT) is G1. Residue 19–26 (GHVDHGKT) coordinates GTP. Thr-26 lines the Mg(2+) pocket. Residues 55–59 (GITIS) are G2. Positions 76–79 (DCPG) are G3. Residues 76–80 (DCPGH) and 131–134 (NKVD) each bind GTP. The segment at 131–134 (NKVD) is G4. Positions 169–171 (SAL) are G5.

Belongs to the TRAFAC class translation factor GTPase superfamily. Classic translation factor GTPase family. EF-Tu/EF-1A subfamily. In terms of assembly, monomer.

The protein localises to the cytoplasm. It carries out the reaction GTP + H2O = GDP + phosphate + H(+). Its function is as follows. GTP hydrolase that promotes the GTP-dependent binding of aminoacyl-tRNA to the A-site of ribosomes during protein biosynthesis. This is Elongation factor Tu from Mesorhizobium japonicum (strain LMG 29417 / CECT 9101 / MAFF 303099) (Mesorhizobium loti (strain MAFF 303099)).